A 525-amino-acid polypeptide reads, in one-letter code: GMP synthase [glutamine-hydrolyzing] (525 aa).

The 199-residue stretch at 9–207 (RILILDFGSQ…VRDICQCEAL (199 aa)) folds into the Glutamine amidotransferase type-1 domain. The active-site Nucleophile is cysteine 86. Residues histidine 181 and glutamate 183 contribute to the active site. In terms of domain architecture, GMPS ATP-PPase spans 208–400 (WTPAKIIDDA…LGLPYDMLYR (193 aa)). 235–241 (SGGVDSS) provides a ligand contact to ATP.

In terms of assembly, homodimer.

It carries out the reaction XMP + L-glutamine + ATP + H2O = GMP + L-glutamate + AMP + diphosphate + 2 H(+). The protein operates within purine metabolism; GMP biosynthesis; GMP from XMP (L-Gln route): step 1/1. In terms of biological role, catalyzes the synthesis of GMP from XMP. The protein is GMP synthase [glutamine-hydrolyzing] of Escherichia coli O17:K52:H18 (strain UMN026 / ExPEC).